Consider the following 286-residue polypeptide: UPF0761 membrane protein KPK_5501 (286 aa).

7 helical membrane-spanning segments follow: residues 44-64, 74-94, 104-124, 140-160, 183-203, 210-230, and 244-264; these read LLSL…FPMF, FIFA…IEQF, VGAF…DSAL, FAVY…SLAI, LFPL…VPTT, AVIG…AFAL, and VISV…IVLL.

It belongs to the UPF0761 family.

The protein localises to the cell inner membrane. The sequence is that of UPF0761 membrane protein KPK_5501 from Klebsiella pneumoniae (strain 342).